A 544-amino-acid polypeptide reads, in one-letter code: Transcription factor bHLH119 (544 aa).

2 disordered regions span residues 12 to 59 and 185 to 208; these read NGQV…QPPR and VAST…PPSV. A compositionally biased stretch (polar residues) spans 15 to 29; the sequence is VVRTSQPQRPSSGKP. The span at 50 to 59 shows a compositional bias: pro residues; it reads LPLPLLQPPR. The residue at position 269 (Thr269) is a Phosphothreonine. Phosphoserine is present on Ser274. Disordered stretches follow at residues 342-364 and 522-544; these read QGTE…MHNL and QPPL…STSK. Residues 357-406 form the bHLH domain; the sequence is RAADMHNLSERRRRERINERMKTLQELLPRCRKTDKVSMLEDVIEYVKSL. Over residues 522-535 the composition is skewed to low complexity; the sequence is QPPLPLQGQPTSQP. Phosphoserine is present on residues Ser541 and Ser543.

In terms of assembly, homodimer.

Its subcellular location is the nucleus. The sequence is that of Transcription factor bHLH119 (BHLH119) from Arabidopsis thaliana (Mouse-ear cress).